Reading from the N-terminus, the 219-residue chain is Glutathione S-transferase-like protein LUC7 (219 aa).

In terms of domain architecture, GST N-terminal spans 3 to 84 (PFGRLYSFMP…YLAQSGPYSE (82 aa)). In terms of domain architecture, GST C-terminal spans 90–219 (DAATSAKIRQ…NLIDVKRVHE (130 aa)).

Belongs to the GST superfamily.

Functionally, glutathione S-transferase-like protein; part of the gene cluster that mediates the biosynthesis of the mycotoxin lucilactaene and the lucilactaene-related compound NG-391 that act as cell cycle inhibitors with potent growth inhibitory activity against malarial parasites, moderate growth inhibitory activity against cancer cells, and no activity against bacteria and fungi. Within the cluster, LUC7 and LUC8 encode proteins which are not commonly involved in the biosynthesis of secondary metabolites and are not essential for lucilactaene biosynthesis. This chain is Glutathione S-transferase-like protein LUC7, found in Fusarium sp.